The primary structure comprises 307 residues: Golgi to ER traffic protein 2 (307 aa).

At 1–173 (MSDSTDSPAV…QAYDTYQQKL (173 aa)) the chain is on the cytoplasmic side. Residues 41–52 (LSQGSSVKTTGV) show a composition bias toward polar residues. A disordered region spans residues 41-73 (LSQGSSVKTTGVKSVLDEPQPTATSSAIHDEDP). Residues 174–194 (WKSRFLVIRVVVTLFNFFYHY) form a helical membrane-spanning segment. Residues 195–220 (LNVPSFHASNYSYVRDLAQDEFPVRN) are Lumenal-facing. Residues 221–240 (FFTWFAAFEVIIVLQYYTVF) form a helical membrane-spanning segment. The Cytoplasmic portion of the chain corresponds to 241–284 (HKLGLFHAANQNSMIMKLMSMGSMVLPQLNTYQPLVARFLGYYE). Residues 285–305 (LFGIIFGDLSLVIVLFGLLSF) traverse the membrane as a helical segment. At 306–307 (TK) the chain is on the lumenal side.

It belongs to the GET2 family. Component of the Golgi to ER traffic (GET) complex, which is composed of GET1, GET2 and GET3. Within the complex, GET1 and GET2 form a heterotetramer which is stabilized by phosphatidylinositol binding and which binds to the GET3 homodimer.

Its subcellular location is the endoplasmic reticulum membrane. The protein localises to the golgi apparatus membrane. Its function is as follows. Required for the post-translational delivery of tail-anchored (TA) proteins to the endoplasmic reticulum. Together with GET1, acts as a membrane receptor for soluble GET3, which recognizes and selectively binds the transmembrane domain of TA proteins in the cytosol. The GET complex cooperates with the HDEL receptor ERD2 to mediate the ATP-dependent retrieval of resident ER proteins that contain a C-terminal H-D-E-L retention signal from the Golgi to the ER. The polypeptide is Golgi to ER traffic protein 2 (Candida tropicalis (strain ATCC MYA-3404 / T1) (Yeast)).